Consider the following 393-residue polypeptide: Formate-dependent phosphoribosylglycinamide formyltransferase (393 aa).

Residues 22 to 23 and Glu-82 each bind N(1)-(5-phospho-beta-D-ribosyl)glycinamide; that span reads EL. ATP is bound by residues Arg-114, Lys-155, 160–165, 195–198, and Glu-203; these read SSGKGQ and EGFI. The region spanning 119 to 308 is the ATP-grasp domain; that stretch reads RLAAEELKLP…QFALHARAIL (190 aa). Mg(2+)-binding residues include Glu-267 and Glu-279. N(1)-(5-phospho-beta-D-ribosyl)glycinamide contacts are provided by residues Asp-286, Lys-356, and 363 to 364; that span reads RR.

Belongs to the PurK/PurT family. As to quaternary structure, homodimer.

It catalyses the reaction N(1)-(5-phospho-beta-D-ribosyl)glycinamide + formate + ATP = N(2)-formyl-N(1)-(5-phospho-beta-D-ribosyl)glycinamide + ADP + phosphate + H(+). Its pathway is purine metabolism; IMP biosynthesis via de novo pathway; N(2)-formyl-N(1)-(5-phospho-D-ribosyl)glycinamide from N(1)-(5-phospho-D-ribosyl)glycinamide (formate route): step 1/1. In terms of biological role, involved in the de novo purine biosynthesis. Catalyzes the transfer of formate to 5-phospho-ribosyl-glycinamide (GAR), producing 5-phospho-ribosyl-N-formylglycinamide (FGAR). Formate is provided by PurU via hydrolysis of 10-formyl-tetrahydrofolate. This chain is Formate-dependent phosphoribosylglycinamide formyltransferase, found in Pseudomonas savastanoi pv. phaseolicola (strain 1448A / Race 6) (Pseudomonas syringae pv. phaseolicola (strain 1448A / Race 6)).